The primary structure comprises 344 residues: Protein RecA (344 aa).

Residue 65–72 (GPESSGKT) participates in ATP binding.

The protein belongs to the RecA family.

The protein resides in the cytoplasm. In terms of biological role, can catalyze the hydrolysis of ATP in the presence of single-stranded DNA, the ATP-dependent uptake of single-stranded DNA by duplex DNA, and the ATP-dependent hybridization of homologous single-stranded DNAs. It interacts with LexA causing its activation and leading to its autocatalytic cleavage. The protein is Protein RecA of Campylobacter lari.